The following is a 59-amino-acid chain: UPF0434 protein Ping_0902 (59 aa).

The protein belongs to the UPF0434 family.

In Psychromonas ingrahamii (strain DSM 17664 / CCUG 51855 / 37), this protein is UPF0434 protein Ping_0902.